Here is a 71-residue protein sequence, read N- to C-terminus: UPF0346 protein BcerKBAB4_2120 (71 aa).

This sequence belongs to the UPF0346 family.

This Bacillus mycoides (strain KBAB4) (Bacillus weihenstephanensis) protein is UPF0346 protein BcerKBAB4_2120.